The chain runs to 281 residues: Bis(5'-nucleosyl)-tetraphosphatase, symmetrical (281 aa).

The protein belongs to the Ap4A hydrolase family.

The catalysed reaction is P(1),P(4)-bis(5'-adenosyl) tetraphosphate + H2O = 2 ADP + 2 H(+). In terms of biological role, hydrolyzes diadenosine 5',5'''-P1,P4-tetraphosphate to yield ADP. The sequence is that of Bis(5'-nucleosyl)-tetraphosphatase, symmetrical from Acidovorax ebreus (strain TPSY) (Diaphorobacter sp. (strain TPSY)).